The primary structure comprises 396 residues: 1-deoxy-D-xylulose 5-phosphate reductoisomerase (396 aa).

NADPH contacts are provided by T13, G14, S15, I16, and N127. K128 is a 1-deoxy-D-xylulose 5-phosphate binding site. E129 is an NADPH binding site. D153 lines the Mn(2+) pocket. 1-deoxy-D-xylulose 5-phosphate is bound by residues S154, E155, S184, and H207. A Mn(2+)-binding site is contributed by E155. An NADPH-binding site is contributed by G213. S220, N225, K226, and E229 together coordinate 1-deoxy-D-xylulose 5-phosphate. A Mn(2+)-binding site is contributed by E229.

It belongs to the DXR family. Mg(2+) serves as cofactor. Mn(2+) is required as a cofactor.

It catalyses the reaction 2-C-methyl-D-erythritol 4-phosphate + NADP(+) = 1-deoxy-D-xylulose 5-phosphate + NADPH + H(+). It participates in isoprenoid biosynthesis; isopentenyl diphosphate biosynthesis via DXP pathway; isopentenyl diphosphate from 1-deoxy-D-xylulose 5-phosphate: step 1/6. In terms of biological role, catalyzes the NADPH-dependent rearrangement and reduction of 1-deoxy-D-xylulose-5-phosphate (DXP) to 2-C-methyl-D-erythritol 4-phosphate (MEP). This chain is 1-deoxy-D-xylulose 5-phosphate reductoisomerase, found in Pseudomonas fluorescens (strain Pf0-1).